Here is a 397-residue protein sequence, read N- to C-terminus: CCA-adding enzyme (397 aa).

The ATP site is built by Gly8 and Arg11. CTP-binding residues include Gly8 and Arg11. The Mg(2+) site is built by Glu21 and Asp23. ATP is bound by residues Arg91, Arg137, and Arg140. CTP contacts are provided by Arg91, Arg137, and Arg140. The 112-residue stretch at 213–324 (NLDAAIATLK…LALFNGCDAW (112 aa)) folds into the HD domain.

The protein belongs to the tRNA nucleotidyltransferase/poly(A) polymerase family. Bacterial CCA-adding enzyme type 2 subfamily. The cofactor is Mg(2+).

The enzyme catalyses a tRNA precursor + 2 CTP + ATP = a tRNA with a 3' CCA end + 3 diphosphate. It catalyses the reaction a tRNA with a 3' CCA end + 2 CTP + ATP = a tRNA with a 3' CCACCA end + 3 diphosphate. Its function is as follows. Catalyzes the addition and repair of the essential 3'-terminal CCA sequence in tRNAs without using a nucleic acid template. Adds these three nucleotides in the order of C, C, and A to the tRNA nucleotide-73, using CTP and ATP as substrates and producing inorganic pyrophosphate. tRNA 3'-terminal CCA addition is required both for tRNA processing and repair. Also involved in tRNA surveillance by mediating tandem CCA addition to generate a CCACCA at the 3' terminus of unstable tRNAs. While stable tRNAs receive only 3'-terminal CCA, unstable tRNAs are marked with CCACCA and rapidly degraded. The sequence is that of CCA-adding enzyme from Alteromonas mediterranea (strain DSM 17117 / CIP 110805 / LMG 28347 / Deep ecotype).